A 108-amino-acid polypeptide reads, in one-letter code: UPF0060 membrane protein BH2744 (108 aa).

4 helical membrane passes run 6–26 (TLFL…WLWL), 31–51 (PVYL…IATF), 60–80 (VYAA…WWID), and 86–106 (TYDW…LWAP).

The protein belongs to the UPF0060 family.

It is found in the cell membrane. The sequence is that of UPF0060 membrane protein BH2744 from Halalkalibacterium halodurans (strain ATCC BAA-125 / DSM 18197 / FERM 7344 / JCM 9153 / C-125) (Bacillus halodurans).